The sequence spans 409 residues: F-box/kelch-repeat protein At2g44130 (409 aa).

The F-box domain occupies 17-63 (HELIPGLPSELALECLVRVPFQFQSAMRSVCRSWRSLLSDSSFIQER). Kelch repeat units lie at residues 98-148 (KKSE…VLQD), 151-199 (KILL…SVSP), 201-248 (KVYV…AVGM), and 251-300 (RFCV…RTAG).

The protein is F-box/kelch-repeat protein At2g44130 of Arabidopsis thaliana (Mouse-ear cress).